Here is a 241-residue protein sequence, read N- to C-terminus: Exosome complex component RRP41 homolog (241 aa).

An N-acetylmethionine modification is found at M1.

This sequence belongs to the RNase PH family. As to quaternary structure, component of the RNA exosome complex. Interacts with RPP4.

The protein localises to the cytoplasm. It is found in the nucleus. It localises to the nucleolus. Non-catalytic component of the RNA exosome complex which has 3'-&gt;5' exoribonuclease activity and participates in a multitude of cellular RNA processing, maturation and degradation events. In vitro, is a processive phosphorolytic exonuclease and requires a single-stranded poly(A) tail on the substrate RNA for its activity. Can complement the growth defect of a yeast mutant lacking RRP41 exonuclease. Required for normal development of female gametophytes. This Arabidopsis thaliana (Mouse-ear cress) protein is Exosome complex component RRP41 homolog.